Reading from the N-terminus, the 319-residue chain is Putative peptide biosynthesis protein YydG (319 aa).

One can recognise a Radical SAM core domain in the interval 1–214 (MYNKTVSINL…HCPGYDIVYH (214 aa)). [4Fe-4S] cluster-binding residues include cysteine 14, cysteine 18, and cysteine 21.

The cofactor is [4Fe-4S] cluster.

Functionally, required for production of the modified peptide YydF. May activate a metalloenzyme (Potential). The protein is Putative peptide biosynthesis protein YydG (yydG) of Bacillus subtilis (strain 168).